Consider the following 105-residue polypeptide: Cell division protein FtsB (105 aa).

At 1–3 (MRL) the chain is on the cytoplasmic side. The helical transmembrane segment at 4–21 (FTLILMVVLALVQRQLWF) threads the bilayer. At 22–105 (GKNGLVEYRQ…NKQSSLPKSD (84 aa)) the chain is on the periplasmic side. Positions 28-74 (EYRQVSENLLRRQADNQKLQERNMLLKEDIEDLKSGLEAIEELARND) form a coiled coil.

The protein belongs to the FtsB family. Part of a complex composed of FtsB, FtsL and FtsQ.

Its subcellular location is the cell inner membrane. Essential cell division protein. May link together the upstream cell division proteins, which are predominantly cytoplasmic, with the downstream cell division proteins, which are predominantly periplasmic. This Tolumonas auensis (strain DSM 9187 / NBRC 110442 / TA 4) protein is Cell division protein FtsB.